Here is a 331-residue protein sequence, read N- to C-terminus: Biotin synthase (331 aa).

A Radical SAM core domain is found at 52-277 (PDVEVEGIIS…RTMLRFAGGR (226 aa)). Residues Cys67, Cys71, and Cys74 each contribute to the [4Fe-4S] cluster site. Positions 110, 143, 202, and 272 each coordinate [2Fe-2S] cluster.

Belongs to the radical SAM superfamily. Biotin synthase family. In terms of assembly, homodimer. [4Fe-4S] cluster serves as cofactor. It depends on [2Fe-2S] cluster as a cofactor.

The enzyme catalyses (4R,5S)-dethiobiotin + (sulfur carrier)-SH + 2 reduced [2Fe-2S]-[ferredoxin] + 2 S-adenosyl-L-methionine = (sulfur carrier)-H + biotin + 2 5'-deoxyadenosine + 2 L-methionine + 2 oxidized [2Fe-2S]-[ferredoxin]. It functions in the pathway cofactor biosynthesis; biotin biosynthesis; biotin from 7,8-diaminononanoate: step 2/2. In terms of biological role, catalyzes the conversion of dethiobiotin (DTB) to biotin by the insertion of a sulfur atom into dethiobiotin via a radical-based mechanism. This Mycolicibacterium vanbaalenii (strain DSM 7251 / JCM 13017 / BCRC 16820 / KCTC 9966 / NRRL B-24157 / PYR-1) (Mycobacterium vanbaalenii) protein is Biotin synthase.